A 67-amino-acid polypeptide reads, in one-letter code: Protein AaeX (67 aa).

Helical transmembrane passes span 3-23 (LFPV…ELLL) and 43-63 (FVWH…YLIS).

Belongs to the AaeX family.

The protein localises to the cell membrane. This is Protein AaeX from Escherichia coli O1:K1 / APEC.